We begin with the raw amino-acid sequence, 154 residues long: Aspartate carbamoyltransferase regulatory chain (154 aa).

Zn(2+)-binding residues include Cys109, Cys114, Cys138, and Cys141.

The protein belongs to the PyrI family. As to quaternary structure, contains catalytic and regulatory chains. Zn(2+) serves as cofactor.

In terms of biological role, involved in allosteric regulation of aspartate carbamoyltransferase. The sequence is that of Aspartate carbamoyltransferase regulatory chain from Aeromonas hydrophila subsp. hydrophila (strain ATCC 7966 / DSM 30187 / BCRC 13018 / CCUG 14551 / JCM 1027 / KCTC 2358 / NCIMB 9240 / NCTC 8049).